The chain runs to 147 residues: Deoxyuridine 5'-triphosphate nucleotidohydrolase (147 aa).

Substrate-binding positions include 67–69 (RSG), N80, and 84–86 (TID).

It belongs to the dUTPase family. Requires Mg(2+) as cofactor.

It carries out the reaction dUTP + H2O = dUMP + diphosphate + H(+). The protein operates within pyrimidine metabolism; dUMP biosynthesis; dUMP from dCTP (dUTP route): step 2/2. This enzyme is involved in nucleotide metabolism: it produces dUMP, the immediate precursor of thymidine nucleotides and it decreases the intracellular concentration of dUTP so that uracil cannot be incorporated into DNA. This Anaeromyxobacter sp. (strain Fw109-5) protein is Deoxyuridine 5'-triphosphate nucleotidohydrolase.